A 150-amino-acid chain; its full sequence is Protein SLM6 (150 aa).

Residues M1–S76 lie on the Extracellular side of the membrane. Residues W77–F97 traverse the membrane as a helical segment. Topologically, residues S98–S104 are cytoplasmic. A helical membrane pass occupies residues L105–A125. Residues A126–L150 are Extracellular-facing.

Its subcellular location is the membrane. The sequence is that of Protein SLM6 from Saccharomyces cerevisiae (strain ATCC 204508 / S288c) (Baker's yeast).